The chain runs to 526 residues: Probable DNA ligase (526 aa).

Glu228 provides a ligand contact to ATP. Catalysis depends on Lys230, which acts as the N6-AMP-lysine intermediate. 6 residues coordinate ATP: Arg235, Arg250, Glu279, Phe319, Arg391, and Lys397.

Belongs to the ATP-dependent DNA ligase family. It depends on Mg(2+) as a cofactor.

It catalyses the reaction ATP + (deoxyribonucleotide)n-3'-hydroxyl + 5'-phospho-(deoxyribonucleotide)m = (deoxyribonucleotide)n+m + AMP + diphosphate.. Functionally, DNA ligase that seals nicks in double-stranded DNA during DNA replication, DNA recombination and DNA repair. This chain is Probable DNA ligase, found in Mycobacterium avium (strain 104).